The following is a 196-amino-acid chain: Agamous-like MADS-box protein AGL70 (196 aa).

The MADS-box domain occupies 1 to 61 (MGRRKVEIKR…GKLYDSASGD (61 aa)). A Nuclear localization signal motif is present at residues 8 to 15 (IKRIENKS). The K-box domain maps to 80–170 (ALDLAEKIRN…ASQVGKKTFL (91 aa)).

In terms of tissue distribution, mostly expressed in roots, leaves and flowers, and, to a lower extent, in inflorescence, siliques, pollen and shoots.

It is found in the nucleus. Probable transcription factor involved in the negative regulation of flowering time, probably through the photoperiodic and vernalization pathways; more efficient in cv. Landsberg erecta than in cv. Columbia background. Prevents premature flowering. Involved in the modulation of vernalization impact on flowering according to genotype acclimation to altitude. In Arabidopsis thaliana (Mouse-ear cress), this protein is Agamous-like MADS-box protein AGL70.